Reading from the N-terminus, the 386-residue chain is Succinate--CoA ligase [ADP-forming] subunit beta (386 aa).

The region spanning 9 to 244 is the ATP-grasp domain; that stretch reads KEILRKYGVP…HDEEDPLETR (236 aa). ATP is bound by residues lysine 46, 53-55, glutamate 99, cysteine 102, and glutamate 107; that span reads GRG. Residues asparagine 199 and aspartate 213 each contribute to the Mg(2+) site. Substrate contacts are provided by residues asparagine 264 and 321 to 323; that span reads GIM.

This sequence belongs to the succinate/malate CoA ligase beta subunit family. Heterotetramer of two alpha and two beta subunits. Requires Mg(2+) as cofactor.

The catalysed reaction is succinate + ATP + CoA = succinyl-CoA + ADP + phosphate. It carries out the reaction GTP + succinate + CoA = succinyl-CoA + GDP + phosphate. Its pathway is carbohydrate metabolism; tricarboxylic acid cycle; succinate from succinyl-CoA (ligase route): step 1/1. In terms of biological role, succinyl-CoA synthetase functions in the citric acid cycle (TCA), coupling the hydrolysis of succinyl-CoA to the synthesis of either ATP or GTP and thus represents the only step of substrate-level phosphorylation in the TCA. The beta subunit provides nucleotide specificity of the enzyme and binds the substrate succinate, while the binding sites for coenzyme A and phosphate are found in the alpha subunit. This is Succinate--CoA ligase [ADP-forming] subunit beta from Rickettsia prowazekii (strain Madrid E).